Consider the following 134-residue polypeptide: Profilin-2 (134 aa).

A disulfide bridge connects residues cysteine 13 and cysteine 118. The Involved in PIP2 interaction signature appears at 84–100 (AVIRGKKGSGGITIKKT). The residue at position 114 (threonine 114) is a Phosphothreonine.

It belongs to the profilin family. Occurs in many kinds of cells as a complex with monomeric actin in a 1:1 ratio. Post-translationally, phosphorylated by MAP kinases.

It localises to the cytoplasm. Its subcellular location is the cytoskeleton. Functionally, binds to actin and affects the structure of the cytoskeleton. At high concentrations, profilin prevents the polymerization of actin, whereas it enhances it at low concentrations. The protein is Profilin-2 of Olea europaea (Common olive).